Consider the following 698-residue polypeptide: UvrABC system protein B (698 aa).

Residues 25–183 enclose the Helicase ATP-binding domain; the sequence is NGLNSGLVHQ…TLIDLQFERN (159 aa). ATP is bound at residue 38–45; sequence GATGTGKT. Residues 91-114 carry the Beta-hairpin motif; that stretch reads YYDAYTPEAYVPSKDLYIEKEAQI. One can recognise a Helicase C-terminal domain in the interval 428–594; sequence QIDDLLGEIK…GIVKAVRDLT (167 aa). Positions 622 to 657 constitute a UVR domain; it reads FKVINALEKQMKQAAKDLEFEKAALLRDQLTEMRQT.

It belongs to the UvrB family. In terms of assembly, forms a heterotetramer with UvrA during the search for lesions. Interacts with UvrC in an incision complex.

The protein localises to the cytoplasm. Functionally, the UvrABC repair system catalyzes the recognition and processing of DNA lesions. A damage recognition complex composed of 2 UvrA and 2 UvrB subunits scans DNA for abnormalities. Upon binding of the UvrA(2)B(2) complex to a putative damaged site, the DNA wraps around one UvrB monomer. DNA wrap is dependent on ATP binding by UvrB and probably causes local melting of the DNA helix, facilitating insertion of UvrB beta-hairpin between the DNA strands. Then UvrB probes one DNA strand for the presence of a lesion. If a lesion is found the UvrA subunits dissociate and the UvrB-DNA preincision complex is formed. This complex is subsequently bound by UvrC and the second UvrB is released. If no lesion is found, the DNA wraps around the other UvrB subunit that will check the other stand for damage. This is UvrABC system protein B from Herpetosiphon aurantiacus (strain ATCC 23779 / DSM 785 / 114-95).